Consider the following 277-residue polypeptide: NADPH-dependent 7-cyano-7-deazaguanine reductase (277 aa).

Substrate is bound at residue 86–88; it reads IES. 88–89 provides a ligand contact to NADPH; that stretch reads SK. Cys-184 acts as the Thioimide intermediate in catalysis. The active-site Proton donor is the Asp-191. 223-224 contacts substrate; sequence HE. Position 252 to 253 (252 to 253) interacts with NADPH; sequence RG.

The protein belongs to the GTP cyclohydrolase I family. QueF type 2 subfamily. Homodimer.

The protein resides in the cytoplasm. It catalyses the reaction 7-aminomethyl-7-carbaguanine + 2 NADP(+) = 7-cyano-7-deazaguanine + 2 NADPH + 3 H(+). The protein operates within tRNA modification; tRNA-queuosine biosynthesis. Functionally, catalyzes the NADPH-dependent reduction of 7-cyano-7-deazaguanine (preQ0) to 7-aminomethyl-7-deazaguanine (preQ1). This Chromohalobacter salexigens (strain ATCC BAA-138 / DSM 3043 / CIP 106854 / NCIMB 13768 / 1H11) protein is NADPH-dependent 7-cyano-7-deazaguanine reductase.